Reading from the N-terminus, the 299-residue chain is Tryptophan prenyltransferase ComQ (299 aa).

Asp67 and Asp71 together coordinate Mg(2+).

Belongs to the FPP/GGPP synthase family. The cofactor is Mg(2+).

It is found in the cell membrane. It carries out the reaction L-tryptophyl-[protein] + (2E,6E)-farnesyl diphosphate = (2S,3R)-3-farnesyl-2,3-dihydro-2,N(alpha)-cyclo-L-tryptophyl-[protein] + diphosphate. Its function is as follows. Part of a major quorum-sensing system that regulates the development of genetic competence. Involved in the maturation of the competence pheromone ComX. Acts by catalyzing the transfer of a farnesyl group on the ComX pheromone. Shows weak geranylation activity with geranyl diphosphate (GPP). The chain is Tryptophan prenyltransferase ComQ from Bacillus subtilis (strain 168).